The following is a 331-amino-acid chain: Phenylalanine--tRNA ligase alpha subunit (331 aa).

E252 serves as a coordination point for Mg(2+).

It belongs to the class-II aminoacyl-tRNA synthetase family. Phe-tRNA synthetase alpha subunit type 1 subfamily. As to quaternary structure, tetramer of two alpha and two beta subunits. It depends on Mg(2+) as a cofactor.

Its subcellular location is the cytoplasm. The catalysed reaction is tRNA(Phe) + L-phenylalanine + ATP = L-phenylalanyl-tRNA(Phe) + AMP + diphosphate + H(+). The polypeptide is Phenylalanine--tRNA ligase alpha subunit (Xanthomonas euvesicatoria pv. vesicatoria (strain 85-10) (Xanthomonas campestris pv. vesicatoria)).